The sequence spans 145 residues: D-aminoacyl-tRNA deacylase (145 aa).

Positions 137 to 138 (GP) match the Gly-cisPro motif, important for rejection of L-amino acids motif.

The protein belongs to the DTD family. As to quaternary structure, homodimer.

Its subcellular location is the cytoplasm. The enzyme catalyses glycyl-tRNA(Ala) + H2O = tRNA(Ala) + glycine + H(+). It catalyses the reaction a D-aminoacyl-tRNA + H2O = a tRNA + a D-alpha-amino acid + H(+). An aminoacyl-tRNA editing enzyme that deacylates mischarged D-aminoacyl-tRNAs. Also deacylates mischarged glycyl-tRNA(Ala), protecting cells against glycine mischarging by AlaRS. Acts via tRNA-based rather than protein-based catalysis; rejects L-amino acids rather than detecting D-amino acids in the active site. By recycling D-aminoacyl-tRNA to D-amino acids and free tRNA molecules, this enzyme counteracts the toxicity associated with the formation of D-aminoacyl-tRNA entities in vivo and helps enforce protein L-homochirality. In Pseudomonas fluorescens (strain ATCC BAA-477 / NRRL B-23932 / Pf-5), this protein is D-aminoacyl-tRNA deacylase.